A 212-amino-acid polypeptide reads, in one-letter code: Stringent starvation protein A homolog (212 aa).

One can recognise a GST N-terminal domain in the interval 9-87 (SVMTLFSNKD…YLDERFPHPP (79 aa)). Residues 92–212 (YPVSRAKDRL…AAPKNLMDDK (121 aa)) form the GST C-terminal domain.

The protein belongs to the GST superfamily. HSP26 family.

In terms of biological role, forms an equimolar complex with the RNA polymerase holoenzyme (RNAP) but not with the core enzyme. The chain is Stringent starvation protein A homolog (sspA) from Haemophilus influenzae (strain ATCC 51907 / DSM 11121 / KW20 / Rd).